Here is a 143-residue protein sequence, read N- to C-terminus: Sirohydrochlorin cobaltochelatase (143 aa).

The active-site Proton acceptor is His-18. His-18 is a Co(2+) binding site. Residue His-18 coordinates Ni(2+). Residues Arg-53 and 78-83 (LAHGVH) contribute to the substrate site. Co(2+) is bound at residue His-83. His-83 contributes to the Ni(2+) binding site.

It belongs to the CbiX family. CbiXS subfamily. As to quaternary structure, homotetramer; dimer of dimers.

The enzyme catalyses Co-sirohydrochlorin + 2 H(+) = sirohydrochlorin + Co(2+). It carries out the reaction Ni-sirohydrochlorin + 2 H(+) = sirohydrochlorin + Ni(2+). The protein operates within cofactor biosynthesis; adenosylcobalamin biosynthesis; cob(II)yrinate a,c-diamide from sirohydrochlorin (anaerobic route): step 1/10. In terms of biological role, catalyzes the insertion of Co(2+) into sirohydrochlorin as part of the anaerobic pathway to cobalamin biosynthesis. Involved in the biosynthesis of the unique nickel-containing tetrapyrrole coenzyme F430, the prosthetic group of methyl-coenzyme M reductase (MCR), which plays a key role in methanogenesis and anaerobic methane oxidation (Potential). Catalyzes the insertion of Ni(2+) into sirohydrochlorin to yield Ni-sirohydrochlorin (Potential). The protein is Sirohydrochlorin cobaltochelatase of Methanothermobacter thermautotrophicus (strain ATCC 29096 / DSM 1053 / JCM 10044 / NBRC 100330 / Delta H) (Methanobacterium thermoautotrophicum).